The following is a 351-amino-acid chain: Holliday junction branch migration complex subunit RuvB (351 aa).

The segment at 1–186 (MDEKIETRLI…FGIVQRLEFY (186 aa)) is large ATPase domain (RuvB-L). Residues Ile25, Arg26, Gly67, Lys70, Thr71, Thr72, 133–135 (EDF), Arg176, Tyr186, and Arg223 each bind ATP. Thr71 is a binding site for Mg(2+). A small ATPAse domain (RuvB-S) region spans residues 187–257 (RIPDLIHIVK…IAKEALDLLN (71 aa)). The interval 260–351 (IRGLDVMDRK…ENFDLLGKVE (92 aa)) is head domain (RuvB-H). DNA-binding residues include Arg296, Arg315, and Arg320.

It belongs to the RuvB family. Homohexamer. Forms an RuvA(8)-RuvB(12)-Holliday junction (HJ) complex. HJ DNA is sandwiched between 2 RuvA tetramers; dsDNA enters through RuvA and exits via RuvB. An RuvB hexamer assembles on each DNA strand where it exits the tetramer. Each RuvB hexamer is contacted by two RuvA subunits (via domain III) on 2 adjacent RuvB subunits; this complex drives branch migration. In the full resolvosome a probable DNA-RuvA(4)-RuvB(12)-RuvC(2) complex forms which resolves the HJ.

Its subcellular location is the cytoplasm. It carries out the reaction ATP + H2O = ADP + phosphate + H(+). In terms of biological role, the RuvA-RuvB-RuvC complex processes Holliday junction (HJ) DNA during genetic recombination and DNA repair, while the RuvA-RuvB complex plays an important role in the rescue of blocked DNA replication forks via replication fork reversal (RFR). RuvA specifically binds to HJ cruciform DNA, conferring on it an open structure. The RuvB hexamer acts as an ATP-dependent pump, pulling dsDNA into and through the RuvAB complex. RuvB forms 2 homohexamers on either side of HJ DNA bound by 1 or 2 RuvA tetramers; 4 subunits per hexamer contact DNA at a time. Coordinated motions by a converter formed by DNA-disengaged RuvB subunits stimulates ATP hydrolysis and nucleotide exchange. Immobilization of the converter enables RuvB to convert the ATP-contained energy into a lever motion, pulling 2 nucleotides of DNA out of the RuvA tetramer per ATP hydrolyzed, thus driving DNA branch migration. The RuvB motors rotate together with the DNA substrate, which together with the progressing nucleotide cycle form the mechanistic basis for DNA recombination by continuous HJ branch migration. Branch migration allows RuvC to scan DNA until it finds its consensus sequence, where it cleaves and resolves cruciform DNA. This is Holliday junction branch migration complex subunit RuvB from Coxiella burnetii (strain CbuG_Q212) (Coxiella burnetii (strain Q212)).